Consider the following 849-residue polypeptide: Putative endoplasmic reticulum mannosidase MNL2 (849 aa).

Residues 1–12 (MSIARLVYSLFR) are Cytoplasmic-facing. The helical; Signal-anchor for type II membrane protein transmembrane segment at 13-32 (RVRSVLLLFITISLLFYYTF) threads the bilayer. At 33-849 (QNEIDILNSY…TQGGHIIKKK (817 aa)) the chain is on the lumenal side. Asn45 carries N-linked (GlcNAc...) asparagine glycosylation. A disordered region spans residues 56–79 (HNTEGSSKLDPPDLSSTGSDRIAT). Cys559 and Cys598 are oxidised to a cystine.

The protein belongs to the glycosyl hydrolase 47 family. Ca(2+) is required as a cofactor.

It is found in the endoplasmic reticulum membrane. It participates in protein modification; protein glycosylation. Functionally, putative mannosidase involved in glycoprotein quality control since it is involved in the targeting of misfolded glycoproteins for ER-associated protein degradation (ERAD). This chain is Putative endoplasmic reticulum mannosidase MNL2 (MNL2), found in Saccharomyces cerevisiae (strain ATCC 204508 / S288c) (Baker's yeast).